Consider the following 423-residue polypeptide: Glutamyl-tRNA reductase (423 aa).

Residues 51 to 54 (TCNR), Ser99, 104 to 106 (EDQ), and Gln110 each bind substrate. Catalysis depends on Cys52, which acts as the Nucleophile. NADP(+) is bound at residue 179-184 (GSGEMG).

The protein belongs to the glutamyl-tRNA reductase family. Homodimer.

It carries out the reaction (S)-4-amino-5-oxopentanoate + tRNA(Glu) + NADP(+) = L-glutamyl-tRNA(Glu) + NADPH + H(+). The protein operates within porphyrin-containing compound metabolism; protoporphyrin-IX biosynthesis; 5-aminolevulinate from L-glutamyl-tRNA(Glu): step 1/2. Functionally, catalyzes the NADPH-dependent reduction of glutamyl-tRNA(Glu) to glutamate 1-semialdehyde (GSA). This Methanoculleus marisnigri (strain ATCC 35101 / DSM 1498 / JR1) protein is Glutamyl-tRNA reductase.